Here is a 414-residue protein sequence, read N- to C-terminus: MAVSTSHFRSLCASRPLSRTAIVGHISCRSYATTEPSPSATSTSTTTTARRRTTFKDKLNAGPSFADFVGNGNTPLDPSEAYALKTALVGPAGRKKEMTRLPSWLKTPIPDSKNYQRLKKDLRGLNLHTVCEEARCPNISDCWGGSDKSAATATIMLMGDTCTRGCRFCSVKTSRTPAPLDPHEPENTAEAISRWGLGYVVLTSVDRDDLADGGARHFAETVMKIKQKAPSILVECLTGDYAGDLEMVKLVARSGLDVYAHNVETVEALTPQVRDRRANFQQSIRVLEAAKNAQPSLITKTSLMLGLGETDDQLWDALRQLRAANVDVVTFGQYMRPTKRHMAVHEYVTPDRFELWRQRALDMGFLYCASGPLVRSSYKAGEAFIENVLKKRRATSGGTETVGVRPVTVDEVTR.

The N-terminal 31 residues, 1–31, are a transit peptide targeting the mitochondrion; that stretch reads MAVSTSHFRSLCASRPLSRTAIVGHISCRSY. Residues 31-51 are disordered; it reads YATTEPSPSATSTSTTTTARR. Residues 32-48 show a composition bias toward low complexity; sequence ATTEPSPSATSTSTTTT. Cys131, Cys136, Cys142, Cys162, Cys166, Cys169, and Ser377 together coordinate [4Fe-4S] cluster. The Radical SAM core domain maps to 145–366; the sequence is GSDKSAATAT…RQRALDMGFL (222 aa).

The protein belongs to the radical SAM superfamily. Lipoyl synthase family. It depends on [4Fe-4S] cluster as a cofactor.

The protein resides in the mitochondrion. It catalyses the reaction [[Fe-S] cluster scaffold protein carrying a second [4Fe-4S](2+) cluster] + N(6)-octanoyl-L-lysyl-[protein] + 2 oxidized [2Fe-2S]-[ferredoxin] + 2 S-adenosyl-L-methionine + 4 H(+) = [[Fe-S] cluster scaffold protein] + N(6)-[(R)-dihydrolipoyl]-L-lysyl-[protein] + 4 Fe(3+) + 2 hydrogen sulfide + 2 5'-deoxyadenosine + 2 L-methionine + 2 reduced [2Fe-2S]-[ferredoxin]. It participates in protein modification; protein lipoylation via endogenous pathway; protein N(6)-(lipoyl)lysine from octanoyl-[acyl-carrier-protein]: step 2/2. Functionally, catalyzes the radical-mediated insertion of two sulfur atoms into the C-6 and C-8 positions of the octanoyl moiety bound to the lipoyl domains of lipoate-dependent enzymes, thereby converting the octanoylated domains into lipoylated derivatives. The polypeptide is Lipoyl synthase, mitochondrial (Aspergillus fumigatus (strain CBS 144.89 / FGSC A1163 / CEA10) (Neosartorya fumigata)).